The sequence spans 271 residues: Aspartate/glutamate leucyltransferase (271 aa).

This sequence belongs to the R-transferase family. Bpt subfamily.

The protein localises to the cytoplasm. The catalysed reaction is N-terminal L-glutamyl-[protein] + L-leucyl-tRNA(Leu) = N-terminal L-leucyl-L-glutamyl-[protein] + tRNA(Leu) + H(+). It carries out the reaction N-terminal L-aspartyl-[protein] + L-leucyl-tRNA(Leu) = N-terminal L-leucyl-L-aspartyl-[protein] + tRNA(Leu) + H(+). Functionally, functions in the N-end rule pathway of protein degradation where it conjugates Leu from its aminoacyl-tRNA to the N-termini of proteins containing an N-terminal aspartate or glutamate. This is Aspartate/glutamate leucyltransferase from Acinetobacter baylyi (strain ATCC 33305 / BD413 / ADP1).